The primary structure comprises 244 residues: Putative outer membrane protein RC0105 (244 aa).

The N-terminal stretch at 1-23 is a signal peptide; sequence MLRIVKKLGIILFVSTISINSFA.

Belongs to the OmpW/AlkL family.

Its subcellular location is the cell outer membrane. This Rickettsia conorii (strain ATCC VR-613 / Malish 7) protein is Putative outer membrane protein RC0105.